A 191-amino-acid polypeptide reads, in one-letter code: Large ribosomal subunit protein uL6 (191 aa).

This sequence belongs to the universal ribosomal protein uL6 family. As to quaternary structure, part of the 50S ribosomal subunit.

Its function is as follows. This protein binds to the 23S rRNA, and is important in its secondary structure. It is located near the subunit interface in the base of the L7/L12 stalk, and near the tRNA binding site of the peptidyltransferase center. The protein is Large ribosomal subunit protein uL6 of Cyanothece sp. (strain PCC 7425 / ATCC 29141).